The chain runs to 218 residues: MSDVIKDLSELRLSYEQGELYETQVASNPHEQFLGWFNHALAANLHEPYAMSLATASASGRPHVRTVLLRGATEAGYDFYTNYDSQKGIDLAENPYAELLFYWPSLERQVRVGGHVVKIPEQESTDYYHKRPRDSQIAAHISTPQSGKIESRELLQQRFQDLQQQVQSREVLDKPEFWGGYRLQPDYYEFWQGRPNRLHDRLSYEKIDGQWTLHRLMP.

Substrate contacts are provided by residues 12 to 15 and R70; that span reads RLSY. Residues 65 to 70, 80 to 81, K87, and Q109 each bind FMN; these read RTVLLR and YT. Residues Y127, R131, and S135 each contribute to the substrate site. Residues 145–146 and W191 each bind FMN; that span reads QS. Position 197 to 199 (197 to 199) interacts with substrate; sequence RLH. R201 lines the FMN pocket.

Belongs to the pyridoxamine 5'-phosphate oxidase family. In terms of assembly, homodimer. FMN is required as a cofactor.

It catalyses the reaction pyridoxamine 5'-phosphate + O2 + H2O = pyridoxal 5'-phosphate + H2O2 + NH4(+). The catalysed reaction is pyridoxine 5'-phosphate + O2 = pyridoxal 5'-phosphate + H2O2. It functions in the pathway cofactor metabolism; pyridoxal 5'-phosphate salvage; pyridoxal 5'-phosphate from pyridoxamine 5'-phosphate: step 1/1. Its pathway is cofactor metabolism; pyridoxal 5'-phosphate salvage; pyridoxal 5'-phosphate from pyridoxine 5'-phosphate: step 1/1. Functionally, catalyzes the oxidation of either pyridoxine 5'-phosphate (PNP) or pyridoxamine 5'-phosphate (PMP) into pyridoxal 5'-phosphate (PLP). The polypeptide is Pyridoxine/pyridoxamine 5'-phosphate oxidase (Acinetobacter baumannii (strain AB0057)).